Here is a 61-residue protein sequence, read N- to C-terminus: MGMRMMFTVFLLVVLATTVVSFMSGRASHGRNAAASDLIALTIKGCCSVPPCIANHPELCV.

A signal peptide spans Met-1–Ser-21. A propeptide spanning residues Phe-22–Lys-44 is cleaved from the precursor.

It belongs to the conotoxin A superfamily. Post-translationally, is not hydroxylated. Contains 2 disulfide bonds. In terms of tissue distribution, expressed by the venom duct.

It localises to the secreted. Alpha-conotoxins act on postsynaptic membranes, they bind to the nicotinic acetylcholine receptors (nAChR) and thus inhibit them. The sequence is that of Alpha-conotoxine-like Am1.4 from Conus amadis (Amadis cone).